The primary structure comprises 213 residues: NADH-quinone oxidoreductase subunit I (213 aa).

4Fe-4S ferredoxin-type domains lie at 74-103 and 113-142; these read RFIE…METS and GNYS…HGIE. Residues cysteine 83, cysteine 86, cysteine 89, cysteine 93, cysteine 122, cysteine 125, cysteine 128, and cysteine 132 each contribute to the [4Fe-4S] cluster site.

It belongs to the complex I 23 kDa subunit family. In terms of assembly, NDH-1 is composed of 14 different subunits. Subunits NuoA, H, J, K, L, M, N constitute the membrane sector of the complex. Requires [4Fe-4S] cluster as cofactor.

It is found in the cell inner membrane. It carries out the reaction a quinone + NADH + 5 H(+)(in) = a quinol + NAD(+) + 4 H(+)(out). Its function is as follows. NDH-1 shuttles electrons from NADH, via FMN and iron-sulfur (Fe-S) centers, to quinones in the respiratory chain. The immediate electron acceptor for the enzyme in this species is believed to be ubiquinone. Couples the redox reaction to proton translocation (for every two electrons transferred, four hydrogen ions are translocated across the cytoplasmic membrane), and thus conserves the redox energy in a proton gradient. This Campylobacter jejuni subsp. doylei (strain ATCC BAA-1458 / RM4099 / 269.97) protein is NADH-quinone oxidoreductase subunit I.